Here is a 510-residue protein sequence, read N- to C-terminus: MPLSLGAEMWGPEAWLLLLLLLASFTGRCPAGELETSDVVTVVLGQDAKLPCFYRGDSGEQVGQVAWARVDAGEGAQELALLHSKYGLHVSPAYEGRVEQPPPPRNPLDGSVLLRNAVQADEGEYECRVSTFPAGSFQARLRLRVLVPPLPSLNPGPALEEGQGLTLAASCTAEGSPAPSVTWDTEVKGTTSSRSFKHSRSAAVTSEFHLVPSRSMNGQPLTCVVSHPGLLQDQRITHILHVSFLAEASVRGLEDQNLWHIGREGAMLKCLSEGQPPPSYNWTRLDGPLPSGVRVDGDTLGFPPLTTEHSGIYVCHVSNEFSSRDSQVTVDVLDPQEDSGKQVDLVSASVVVVGVIAALLFCLLVVVVVLMSRYHRRKAQQMTQKYEEELTLTRENSIRRLHSHHTDPRSQPEESVGLRAEGHPDSLKDNSSCSVMSEEPEGRSYSTLTTVREIETQTELLSPGSGRAEEEEDQDEGIKQAMNHFVQENGTLRAKPTGNGIYINGRGHLV.

Positions 1-31 (MPLSLGAEMWGPEAWLLLLLLLASFTGRCPA) are cleaved as a signal peptide. Residues 32–144 (GELETSDVVT…GSFQARLRLR (113 aa)) form the Ig-like V-type domain. Residues 32–349 (GELETSDVVT…GKQVDLVSAS (318 aa)) are Extracellular-facing. Cystine bridges form between C52–C127, C171–C223, and C270–C315. Ig-like C2-type domains are found at residues 148–237 (PPLP…QRIT) and 248–331 (ASVR…VTVD). N-linked (GlcNAc...) asparagine glycosylation occurs at N281. Residues 350–370 (VVVVGVIAALLFCLLVVVVVL) traverse the membrane as a helical segment. At 371–510 (MSRYHRRKAQ…IYINGRGHLV (140 aa)) the chain is on the cytoplasmic side. Residues 399-412 (RRLHSHHTDPRSQP) show a composition bias toward basic and acidic residues. Disordered regions lie at residues 399 to 447 (RRLH…SYST) and 457 to 476 (QTEL…DQDE).

This sequence belongs to the nectin family. Self-associates. Interacts via its Ig-like V-type domain with NECTIN1 Ig-like V-type domain. Interacts via its C-terminus with AFDN. In terms of assembly, (Microbial infection) Interacts (via N-terminus) with measles virus hemagglutinin protein. In terms of processing, the soluble form is produced by proteolytic cleavage at the cell surface (shedding), probably by ADAM17/TACE. As to expression, predominantly expressed in placenta. Not detected in normal breast epithelium but expressed in breast carcinoma.

It localises to the cell membrane. The protein resides in the cell junction. The protein localises to the adherens junction. It is found in the secreted. In terms of biological role, seems to be involved in cell adhesion through trans-homophilic and -heterophilic interactions, the latter including specifically interactions with NECTIN1. Does not act as receptor for alpha-herpesvirus entry into cells. (Microbial infection) Acts as a receptor for measles virus. This is Nectin-4 from Homo sapiens (Human).